We begin with the raw amino-acid sequence, 426 residues long: Zona pellucida sperm-binding protein 3 (426 aa).

The first 22 residues, 1–22, serve as a signal peptide directing secretion; sequence MGLSYGIFICFLLLGGMELCCP. Gln23 carries the post-translational modification Pyrrolidone carboxylic acid. Topologically, residues 23–385 are extracellular; sequence QTIWPTETYY…IEGSTSPHTS (363 aa). The region spanning 43-305 is the ZP domain; it reads DCLESQLVVT…KACSFIKSTK (263 aa). 2 cysteine pairs are disulfide-bonded: Cys44/Cys138 and Cys76/Cys97. 2 N-linked (GlcNAc...) asparagine glycosylation sites follow: Asn123 and Asn145. 3 O-linked (GalNAc...) threonine glycosylation sites follow: Thr154, Thr160, and Thr161. 2 disulfides stabilise this stretch: Cys215/Cys280 and Cys237/Cys298. An N-linked (GlcNAc...) asparagine glycan is attached at Asn244. Residues 351 to 426 constitute a propeptide, removed in mature form; the sequence is RRHVTEEAEI…PVICPASVSQ (76 aa). Residues 386 to 406 form a helical membrane-spanning segment; it reads VMLGLGLATVVSLTLATIVLV. Topologically, residues 407-426 are cytoplasmic; sequence LAKRHRTASHPVICPASVSQ.

This sequence belongs to the ZP domain family. ZPC subfamily. Polymers of ZP2 and ZP3 organized into long filaments cross-linked by ZP1 homodimers. Interacts with ZP1 and ZP2. Post-translationally, proteolytically cleaved before the transmembrane segment to yield the secreted ectodomain incorporated in the zona pellucida. N-glycosylated. In terms of processing, O-glycosylated; removal of O-linked glycans may play an important role in the post-fertilization block to polyspermy. In terms of tissue distribution, expressed in oocytes.

The protein localises to the zona pellucida. The protein resides in the cell membrane. Component of the zona pellucida, an extracellular matrix surrounding oocytes which mediates sperm binding, induction of the acrosome reaction and prevents post-fertilization polyspermy. The zona pellucida is composed of 3 to 4 glycoproteins, ZP1, ZP2, ZP3, and ZP4. ZP3 is essential for sperm binding and zona matrix formation. This is Zona pellucida sperm-binding protein 3 (ZP3) from Canis lupus familiaris (Dog).